The sequence spans 159 residues: MAPKGSQRVVNKVVAENRKARFNYEIIDTYEAGLVLKGTEVKSLREGKANIAESYASDEDGEIWLINSYLPEYLQANRFNHEPRRRRKLLLSGREIHRLRSAVNREGMTLVPLKIYFNDRGRAKMELALAKGKKLHDKRESEKERDWNRQKSRLLKDNG.

The tract at residues 131–159 (KGKKLHDKRESEKERDWNRQKSRLLKDNG) is disordered. A compositionally biased stretch (basic and acidic residues) spans 137–159 (DKRESEKERDWNRQKSRLLKDNG).

The protein belongs to the SmpB family.

It localises to the cytoplasm. Required for rescue of stalled ribosomes mediated by trans-translation. Binds to transfer-messenger RNA (tmRNA), required for stable association of tmRNA with ribosomes. tmRNA and SmpB together mimic tRNA shape, replacing the anticodon stem-loop with SmpB. tmRNA is encoded by the ssrA gene; the 2 termini fold to resemble tRNA(Ala) and it encodes a 'tag peptide', a short internal open reading frame. During trans-translation Ala-aminoacylated tmRNA acts like a tRNA, entering the A-site of stalled ribosomes, displacing the stalled mRNA. The ribosome then switches to translate the ORF on the tmRNA; the nascent peptide is terminated with the 'tag peptide' encoded by the tmRNA and targeted for degradation. The ribosome is freed to recommence translation, which seems to be the essential function of trans-translation. The chain is SsrA-binding protein from Rhizobium etli (strain CIAT 652).